We begin with the raw amino-acid sequence, 194 residues long: MPKLILASTSPWRRALLEKLQISFECAAPEVDETPRSDESPRQLVLRLAQEKAQSLASRYPDHLIIGSDQVCVLDGEITGKPLTEENARLQLRKASGNIVTFYTGLALFNSANGHLQTEVEPFDVHFRHLCEAEIDNYVRKEHPLHCAGSFKSEGFGITLFERLEGRDPNTLVGLPLIALCQMLRREGKNPLMG.

Asp-69 serves as the catalytic Proton acceptor.

Belongs to the Maf family. YceF subfamily. A divalent metal cation serves as cofactor.

It localises to the cytoplasm. It carries out the reaction N(7)-methyl-GTP + H2O = N(7)-methyl-GMP + diphosphate + H(+). Functionally, nucleoside triphosphate pyrophosphatase that hydrolyzes 7-methyl-GTP (m(7)GTP). May have a dual role in cell division arrest and in preventing the incorporation of modified nucleotides into cellular nucleic acids. This Shigella boydii serotype 4 (strain Sb227) protein is 7-methyl-GTP pyrophosphatase (yceF1).